The following is a 406-amino-acid chain: Arginine deiminase (406 aa).

Cysteine 396 (amidino-cysteine intermediate) is an active-site residue.

It belongs to the arginine deiminase family.

It localises to the cytoplasm. It catalyses the reaction L-arginine + H2O = L-citrulline + NH4(+). Its pathway is amino-acid degradation; L-arginine degradation via ADI pathway; carbamoyl phosphate from L-arginine: step 1/2. This is Arginine deiminase from Aliivibrio fischeri (strain MJ11) (Vibrio fischeri).